The sequence spans 302 residues: Gap junction delta-2 protein (302 aa).

The Cytoplasmic portion of the chain corresponds to 1-19; the sequence is MGEWTILERLLEAAVQQHS. A helical transmembrane segment spans residues 20 to 42; that stretch reads TMIGRILLTVVVIFRILVVAIVG. Topologically, residues 43-75 are extracellular; that stretch reads ETVYDDEQTMFVCNTLQPGCNQACYDKAFPISH. The helical transmembrane segment at 76–98 threads the bilayer; the sequence is IRYWVFQIIMVCTPSLCFITYSV. Residues 99-177 lie on the Cytoplasmic side of the membrane; that stretch reads HQSSKQRERQ…KIRRQEGISR (79 aa). A helical membrane pass occupies residues 178-200; the sequence is FYIIQVVFRNALEIGFLMGQYFL. Residues 201-232 lie on the Extracellular side of the membrane; sequence YGFKVPSMYECNRYPCVKMVECYVSRPTEKTV. Residues 233 to 255 traverse the membrane as a helical segment; the sequence is FLVFMFAVSGLCVILNLAELNHL. The Cytoplasmic segment spans residues 256–302; that stretch reads GWRKIKTAVRGAQERRKSIYEIRNKDSPHRIGVPNFGRTQSSDSAYV.

This sequence belongs to the connexin family. Delta-type subfamily. As to quaternary structure, a connexon is composed of a hexamer of connexins. As to expression, retinal specific.

It is found in the cell membrane. The protein localises to the cell junction. Its subcellular location is the gap junction. In terms of biological role, one gap junction consists of a cluster of closely packed pairs of transmembrane channels, the connexons, through which materials of low MW diffuse from one cell to a neighboring cell. The polypeptide is Gap junction delta-2 protein (Leucoraja erinaceus (Little skate)).